Consider the following 647-residue polypeptide: Phosphatidylinositol polyphosphate 5-phosphatase type IV (647 aa).

Disordered stretches follow at residues 1–80 (MPSK…QPPI), 101–131 (RGSQ…PAYS), and 177–196 (HRDA…HASH). Repeat 1 spans residues 52–55 (PMPP). The segment at 52-243 (PMPPFSIPAK…AHSNLGPSRP (192 aa)) is 3 X 4 AA repeats of P-X-X-P. Residues 60–75 (AKTSNQNPQTKANLIT) show a composition bias toward polar residues. Residues 76 to 79 (PQPP) form repeat 2. The residue at position 103 (serine 103) is a Phosphoserine. Residues 120–129 (LQDSVAQSPA) show a composition bias toward polar residues. Residue threonine 197 is modified to Phosphothreonine. Copy 3 of the repeat occupies 240–243 (PSRP). 2 positions are modified to phosphoserine: serine 245 and serine 259. Cysteine 644 carries the post-translational modification Cysteine methyl ester. A lipid anchor (S-farnesyl cysteine) is attached at cysteine 644. Positions 645-647 (TVS) are cleaved as a propeptide — removed in mature form.

Belongs to the inositol polyphosphate 5-phosphatase family. Interacts (when prenylated) with PDE6D; this is important for normal location in cilia. In terms of tissue distribution, highly expressed in testis, in pachytene and diplotene spermatocytes, but not in more mature elongating spermatids. Detected in neurons throughout the brain.

The protein localises to the cytoplasm. Its subcellular location is the cytoskeleton. It is found in the cilium axoneme. It localises to the golgi apparatus. The protein resides in the golgi stack membrane. The protein localises to the cell projection. Its subcellular location is the ruffle. It is found in the cell membrane. It localises to the nucleus. The enzyme catalyses a 1,2-diacyl-sn-glycero-3-phospho-(1D-myo-inositol-4,5-bisphosphate) + H2O = a 1,2-diacyl-sn-glycero-3-phospho-(1D-myo-inositol 4-phosphate) + phosphate. The catalysed reaction is a 1,2-diacyl-sn-glycero-3-phospho-(1D-myo-inositol-3,4,5-trisphosphate) + H2O = a 1,2-diacyl-sn-glycero-3-phospho-(1D-myo-inositol-3,4-bisphosphate) + phosphate. It carries out the reaction a 1,2-diacyl-sn-glycero-3-phospho-(1D-myo-inositol-3,5-bisphosphate) + H2O = a 1,2-diacyl-sn-glycero-3-phospho-(1D-myo-inositol-3-phosphate) + phosphate. In terms of biological role, phosphatidylinositol (PtdIns) phosphatase that specifically hydrolyzes the 5-phosphate of phosphatidylinositol-3,4,5-trisphosphate (PtdIns(3,4,5)P3), phosphatidylinositol 4,5-bisphosphate (PtdIns(4,5)P2) and phosphatidylinositol 3,5-bisphosphate (PtdIns(3,5)P2). Specific for lipid substrates, inactive towards water soluble inositol phosphates. Specific for lipid substrates, inactive towards water soluble inositol phosphates. Plays an essential role in the primary cilium by controlling ciliary growth and phosphoinositide 3-kinase (PI3K) signaling and stability. In Mus musculus (Mouse), this protein is Phosphatidylinositol polyphosphate 5-phosphatase type IV (Inpp5e).